A 460-amino-acid chain; its full sequence is UDP-N-acetylmuramate--L-alanine ligase (460 aa).

Residue 119-125 coordinates ATP; it reads GSHGKTT.

Belongs to the MurCDEF family.

Its subcellular location is the cytoplasm. It catalyses the reaction UDP-N-acetyl-alpha-D-muramate + L-alanine + ATP = UDP-N-acetyl-alpha-D-muramoyl-L-alanine + ADP + phosphate + H(+). It functions in the pathway cell wall biogenesis; peptidoglycan biosynthesis. Its function is as follows. Cell wall formation. The protein is UDP-N-acetylmuramate--L-alanine ligase of Alkaliphilus metalliredigens (strain QYMF).